The chain runs to 363 residues: tRNA N6-adenosine threonylcarbamoyltransferase (363 aa).

Positions 138, 142, and 159 each coordinate Fe cation. Residues 159-163 (YVSGG), D191, D212, and S295 each bind substrate. D323 is a Fe cation binding site.

Belongs to the KAE1 / TsaD family. The cofactor is Fe(2+).

The protein resides in the cytoplasm. It carries out the reaction L-threonylcarbamoyladenylate + adenosine(37) in tRNA = N(6)-L-threonylcarbamoyladenosine(37) in tRNA + AMP + H(+). Required for the formation of a threonylcarbamoyl group on adenosine at position 37 (t(6)A37) in tRNAs that read codons beginning with adenine. Is probably involved in the transfer of the threonylcarbamoyl moiety of threonylcarbamoyl-AMP (TC-AMP) to the N6 group of A37. This chain is tRNA N6-adenosine threonylcarbamoyltransferase, found in Hyperthermus butylicus (strain DSM 5456 / JCM 9403 / PLM1-5).